A 221-amino-acid chain; its full sequence is 2,3-bisphosphoglycerate-dependent phosphoglycerate mutase (221 aa).

Residues 8–15, 21–22, Arg60, 87–90, Lys98, 114–115, and 174–175 contribute to the substrate site; these read RHGNSLWN, TG, ERHY, RR, and GN. Catalysis depends on His9, which acts as the Tele-phosphohistidine intermediate. Residue Glu87 is the Proton donor/acceptor of the active site. Residues 114–140 form a disordered region; that stretch reads RRGYDTPPPPLHSQADDPRYEEPPPLS.

It belongs to the phosphoglycerate mutase family. BPG-dependent PGAM subfamily.

The catalysed reaction is (2R)-2-phosphoglycerate = (2R)-3-phosphoglycerate. Its pathway is carbohydrate degradation; glycolysis; pyruvate from D-glyceraldehyde 3-phosphate: step 3/5. Catalyzes the interconversion of 2-phosphoglycerate and 3-phosphoglycerate. The protein is 2,3-bisphosphoglycerate-dependent phosphoglycerate mutase of Tropheryma whipplei (strain TW08/27) (Whipple's bacillus).